Consider the following 162-residue polypeptide: uncharacterized protein (162 aa).

An HTH asnC-type domain is found at 6 to 99 (LDDLDRAILK…YVTKTLSGFP (94 aa)). Positions 25-44 (IAEISNQLKKPESTVHFRIK) form a DNA-binding region, H-T-H motif.

This is an uncharacterized protein from Pyrococcus horikoshii (strain ATCC 700860 / DSM 12428 / JCM 9974 / NBRC 100139 / OT-3).